Here is a 185-residue protein sequence, read N- to C-terminus: Ribosome-recycling factor (185 aa).

It belongs to the RRF family.

Its subcellular location is the cytoplasm. Its function is as follows. Responsible for the release of ribosomes from messenger RNA at the termination of protein biosynthesis. May increase the efficiency of translation by recycling ribosomes from one round of translation to another. The polypeptide is Ribosome-recycling factor (Teredinibacter turnerae (strain ATCC 39867 / T7901)).